A 94-amino-acid polypeptide reads, in one-letter code: CRISPR-associated endoribonuclease Cas2 (94 aa).

Belongs to the CRISPR-associated endoribonuclease Cas2 protein family. E.coli-subtype subfamily. In terms of assembly, homodimer. Part of the Cas1-Cas2 complex. Forms a hexamer with 2 Cas1 dimers sandwiching a Cas2 dimer. The DNA lies across a flat surface extending from 1 Cas1 dimer, across the Cas2 dimer and contacting the other Cas1 dimer. Only 1 Cas1 protein from each dimer is catalytic, the other interacts with the Cas2 dimer and possibly target DNA.

CRISPR (clustered regularly interspaced short palindromic repeat), is an adaptive immune system that provides protection against mobile genetic elements (viruses, transposable elements and conjugative plasmids). CRISPR clusters contain sequences complementary to antecedent mobile elements and target invading nucleic acids. CRISPR clusters are transcribed and processed into CRISPR RNA (crRNA). The Cas1-Cas2 complex is involved in CRISPR adaptation, the first stage of CRISPR immunity, being required for the addition/removal of CRISPR spacers at the leader end of the CRISPR locus. The Cas1-Cas2 complex introduces staggered nicks into both strands of the CRISPR array near the leader repeat and joins the 5'-ends of the repeat strands with the 3'-ends of the new spacer sequence. Spacer DNA integration requires supercoiled target DNA and 3'-OH ends on the inserted (spacer) DNA and probably initiates with a nucleophilic attack of the C 3'-OH end of the protospacer on the minus strand of the first repeat sequence. Expression of Cas1-Cas2 in a strain lacking both genes permits spacer acquisition. Cas2 not seen to bind DNA alone; the Cas1-Cas2 complex preferentially binds CRISPR-locus DNA. Highest binding is seen to a dual forked DNA complex with 3'-overhangs and a protospacer-adjacent motif-complement specifically positioned. The protospacer DNA lies across a flat surface extending from 1 Cas1 dimer, across the Cas2 dimer and contacting the other Cas1 dimer; the 23 bp-long ds section of the DNA is bracketed by 1 Tyr-22 from each of the Cas1 dimers. Cas1 cuts within the 3'-overhang, to generate a 33-nucleotide DNA that is probably incorporated into the CRISPR leader by a cut-and-paste mechanism. This subunit's probable nuclease activity is not required for spacer acquisition. This is CRISPR-associated endoribonuclease Cas2 (ygbF) from Escherichia coli (strain K12).